The chain runs to 2531 residues: Highly reducing polyketide synthase ausV (2531 aa).

The region spanning 7 to 432 is the Ketosynthase family 3 (KS3) domain; it reads STPIAIIGLS…GTNAHCVMET (426 aa). Active-site for beta-ketoacyl synthase activity residues include Cys-180, His-315, and His-355. The segment at 554–882 is malonyl-CoA:ACP transacylase (MAT) domain; it reads FVFTGQGAQW…HHTLLESMGS (329 aa). Catalysis depends on Ser-644, which acts as the For malonyltransferase activity. An N-terminal hotdog fold region spans residues 939 to 1069; the sequence is HDLCGIRVED…GSVLAGTPSD (131 aa). Residues 939–1238 enclose the PKS/mFAS DH domain; sequence HDLCGIRVED…LATLSVRSGD (300 aa). The segment at 940–1236 is dehydratase (DH) domain; the sequence is DLCGIRVEDD…LELATLSVRS (297 aa). The active-site Proton acceptor; for dehydratase activity is the His-971. Residues 1087–1238 are C-terminal hotdog fold; sequence YVETTPRQAY…LATLSVRSGD (152 aa). The active-site Proton donor; for dehydratase activity is Asp-1152. The interval 1414 to 1592 is methyltransferase (CMet) domain; it reads SSYLRLHARN…DTGFSGVDIS (179 aa). Positions 1832 to 2133 are enoyl reductase (ER) domain; it reads LRFVQDPAYW…SGGAKPGCSR (302 aa). The tract at residues 2156 to 2331 is ketoreductase (KR) domain; sequence HGRALVPDFH…AGVSLSLGFI (176 aa). The Carrier domain maps to 2444–2521; sequence AAATAVLDAL…ELARDLALRS (78 aa). Ser-2481 is modified (O-(pantetheine 4'-phosphoryl)serine).

It participates in secondary metabolite biosynthesis; terpenoid biosynthesis. Highly reducing polyketide synthase; part of the gene cluster that mediates the biosynthesis of calidodehydroaustin, a fungal meroterpenoid. The first step of the pathway is the synthesis of 3,5-dimethylorsellinic acid by the polyketide synthase ausA. 3,5-dimethylorsellinic acid is then prenylated by the polyprenyl transferase ausN. Further epoxidation by the FAD-dependent monooxygenase ausM and cyclization by the probable terpene cyclase ausL lead to the formation of protoaustinoid A. Protoaustinoid A is then oxidized to spiro-lactone preaustinoid A3 by the combined action of the FAD-binding monooxygenases ausB and ausC, and the dioxygenase ausE. Acid-catalyzed keto-rearrangement and ring contraction of the tetraketide portion of preaustinoid A3 by ausJ lead to the formation of preaustinoid A4. The aldo-keto reductase ausK, with the help of ausH, is involved in the next step by transforming preaustinoid A4 into isoaustinone which is in turn hydroxylated by the P450 monooxygenase ausI to form austinolide. The cytochrome P450 monooxygenase ausG modifies austinolide to austinol. Austinol is further acetylated to austin by the O-acetyltransferase ausP, which spontaneously changes to dehydroaustin. The cytochrome P450 monooxygenase ausR then converts dehydroaustin is into 7-dehydrodehydroaustin. The hydroxylation catalyzed by ausR permits the O-acetyltransferase ausQ to add an additional acetyl group to the molecule, leading to the formation of acetoxydehydroaustin. The short chain dehydrogenase ausT catalyzes the reduction of the double bond present between carbon atoms 1 and 2 to convert 7-dehydrodehydroaustin into 1,2-dihydro-7-hydroxydehydroaustin. AusQ catalyzes not only an acetylation reaction but also the addition of the PKS ausV diketide product to 1,2-dihydro-7-hydroxydehydroaustin, forming precalidodehydroaustin. Finally, the iron/alpha-ketoglutarate-dependent dioxygenase converts precalidodehydroaustin into calidodehydroaustin. In Aspergillus calidoustus, this protein is Highly reducing polyketide synthase ausV.